Consider the following 258-residue polypeptide: Ubiquinone/menaquinone biosynthesis C-methyltransferase UbiE (258 aa).

S-adenosyl-L-methionine is bound by residues threonine 81, aspartate 102, and 130 to 131 (NA).

Belongs to the class I-like SAM-binding methyltransferase superfamily. MenG/UbiE family.

It carries out the reaction a 2-demethylmenaquinol + S-adenosyl-L-methionine = a menaquinol + S-adenosyl-L-homocysteine + H(+). It catalyses the reaction a 2-methoxy-6-(all-trans-polyprenyl)benzene-1,4-diol + S-adenosyl-L-methionine = a 5-methoxy-2-methyl-3-(all-trans-polyprenyl)benzene-1,4-diol + S-adenosyl-L-homocysteine + H(+). Its pathway is quinol/quinone metabolism; menaquinone biosynthesis; menaquinol from 1,4-dihydroxy-2-naphthoate: step 2/2. It functions in the pathway cofactor biosynthesis; ubiquinone biosynthesis. Methyltransferase required for the conversion of demethylmenaquinol (DMKH2) to menaquinol (MKH2) and the conversion of 2-polyprenyl-6-methoxy-1,4-benzoquinol (DDMQH2) to 2-polyprenyl-3-methyl-6-methoxy-1,4-benzoquinol (DMQH2). The sequence is that of Ubiquinone/menaquinone biosynthesis C-methyltransferase UbiE from Rhizobium rhizogenes (strain K84 / ATCC BAA-868) (Agrobacterium radiobacter).